A 303-amino-acid polypeptide reads, in one-letter code: Taste receptor type 2 member 13 (303 aa).

The Extracellular segment spans residues 1–7 (MESALPS). The helical transmembrane segment at 8 to 28 (IFTLVIIAEFIIGNLSNGFIV) threads the bilayer. At 29-55 (LINCIDWVSKRELSSVDKLLIILAISR) the chain is on the cytoplasmic side. Residues 56 to 76 (IGLIWEILVSWFLALHSLAIF) form a helical membrane-spanning segment. Topologically, residues 77–85 (VSGTGLRIM) are extracellular. The chain crosses the membrane as a helical span at residues 86-106 (IFSWIVSNHFNLWLATILSIF). Topologically, residues 107–128 (YLLKIASFSSPAFLYLKRRVNK) are cytoplasmic. The helical transmembrane segment at 129 to 149 (VILMILLGTLVFLFLNLIQIN) threads the bilayer. Over 150–184 (MLIKDWLDRYERNTTWNFSMSDFETFSVSVRFTMT) the chain is Extracellular. N-linked (GlcNAc...) asparagine glycans are attached at residues Asn162 and Asn166. The chain crosses the membrane as a helical span at residues 185–205 (MFSLTPFTVAFISFLLLVFSL). Residues 206–232 (QKHLQKMQLNYKGHRDPRTKVHTNALK) lie on the Cytoplasmic side of the membrane. The chain crosses the membrane as a helical span at residues 233–253 (IVISFLLFYASFFLSILISWI). Residues 254–261 (SELYQNTV) lie on the Extracellular side of the membrane. Residues 262–282 (IYMLCETIGAFYPSSHSFLLI) traverse the membrane as a helical segment. Topologically, residues 283-303 (LGNAKLRQAFLLVAAKVWAKR) are cytoplasmic.

The protein belongs to the G-protein coupled receptor T2R family.

The protein localises to the membrane. Receptor that may play a role in the perception of bitterness and is gustducin-linked. May play a role in sensing the chemical composition of the gastrointestinal content. The activity of this receptor may stimulate alpha gustducin, mediate PLC-beta-2 activation and lead to the gating of TRPM5. The chain is Taste receptor type 2 member 13 (TAS2R13) from Pan paniscus (Pygmy chimpanzee).